The sequence spans 151 residues: C-C motif chemokine 25 (151 aa).

An N-terminal signal peptide occupies residues 1-22 (MNLWLLVCLVASLMGAWSTVHT). 2 disulfides stabilise this stretch: Cys-29-Cys-57 and Cys-30-Cys-73. The tract at residues 94–151 (THSKQHLGSRRNLQDSHLGGQRSNTGMSRLAHSKSKSSRSTRSNKKKTSFLNMANPGP) is disordered. Basic residues predominate over residues 124-141 (AHSKSKSSRSTRSNKKKT).

The protein belongs to the intercrine beta (chemokine CC) family.

The protein resides in the secreted. Functionally, potentially involved in T-cell development. Recombinant protein shows chemotactic activity on thymocytes, macrophages, THP-1 cells, and dendritics cells but is inactive on peripheral blood lymphocytes and neutrophils. Binds to CCR9. Binds to atypical chemokine receptor ACKR4 and mediates the recruitment of beta-arrestin (ARRB1/2) to ACKR4. This chain is C-C motif chemokine 25 (CCL25), found in Canis lupus familiaris (Dog).